A 43-amino-acid chain; its full sequence is Protein PsbN (43 aa).

Residues 7–27 traverse the membrane as a helical segment; that stretch reads LIIFIASLLLGLTGYSIYTAF.

The protein belongs to the PsbN family.

Its subcellular location is the plastid. The protein localises to the chloroplast thylakoid membrane. Its function is as follows. May play a role in photosystem I and II biogenesis. This chain is Protein PsbN, found in Guillardia theta (Cryptophyte).